Consider the following 450-residue polypeptide: MNDTIAAIATPLGKGAISVIKISGNSALNILKQLTQKQDFTPRYAYVCDIFSNGVLLDKALVIYFKAPYSFTGEDVCEIQCHGNPLLAQNILQACLNLGARLAKAGEFSKKAFLNHKMDLSEIEASVQLILCEDESVLNALARQLKGELKIFIEEARGNLLKLLASSEVLIDYSEEDIPSDFLDEVSLNLEKQIASFKDLLDFSNTQKQKNKGHALSIVGKPNAGKSSLLNAMLLEERALVSDIKGTTRDTIEEVIELQGHKVRLIDTAGIRESADKIERLGIEKSLKSLENCDIILGVFDLSKPLEKEDFNLIDTLNRAKKPCIVVLNKNDLAPKLELEILKSHLKIPYSLLETNTLNSKACLKDLSQKISAFFPKLDTQNKLLLTSLAQKTALENAIFELQNAKNHLETLELFSYHLLSAIESLNLLTRPYETSQMLDSMFSEFCLGK.

3 residues coordinate (6S)-5-formyl-5,6,7,8-tetrahydrofolate: lysine 21, glutamate 78, and lysine 117. Residues 213 to 376 (GHALSIVGKP…LSQKISAFFP (164 aa)) enclose the TrmE-type G domain. Residue asparagine 223 participates in K(+) binding. Residues 223 to 228 (NAGKSS), 242 to 248 (SDIKGTT), and 267 to 270 (DTAG) each bind GTP. Serine 227 serves as a coordination point for Mg(2+). Residues serine 242, isoleucine 244, and threonine 247 each coordinate K(+). Threonine 248 lines the Mg(2+) pocket. (6S)-5-formyl-5,6,7,8-tetrahydrofolate is bound at residue lysine 450.

The protein belongs to the TRAFAC class TrmE-Era-EngA-EngB-Septin-like GTPase superfamily. TrmE GTPase family. Homodimer. Heterotetramer of two MnmE and two MnmG subunits. It depends on K(+) as a cofactor.

Its subcellular location is the cytoplasm. Its function is as follows. Exhibits a very high intrinsic GTPase hydrolysis rate. Involved in the addition of a carboxymethylaminomethyl (cmnm) group at the wobble position (U34) of certain tRNAs, forming tRNA-cmnm(5)s(2)U34. The sequence is that of tRNA modification GTPase MnmE from Helicobacter pylori (strain Shi470).